A 613-amino-acid polypeptide reads, in one-letter code: Myosin light chain kinase 2, skeletal/cardiac muscle (613 aa).

Residues 1-20 (MTTENGAVELGSQSLSTEQT) show a composition bias toward polar residues. The tract at residues 1-168 (MTTENGAVEL…RGSPAFLHSP (168 aa)) is disordered. A compositionally biased stretch (basic and acidic residues) spans 32–55 (SEKEPSAPATEKDLSPPNAKKDPG). Pro residues predominate over residues 56-66 (APDPKNNPDPP). Residues 67 to 83 (SLKKDPAKAPGPEKKGD) are compositionally biased toward basic and acidic residues. A compositionally biased stretch (gly residues) spans 95-105 (SGEGDGGGGPA). Over residues 106 to 122 (EGSEGPPAALPLPTATA) the composition is skewed to low complexity. Over residues 145-158 (KAGKKAAECREAGR) the composition is skewed to basic and acidic residues. Residues serine 161, serine 167, and serine 169 each carry the phosphoserine modification. The tract at residues 219 to 240 (EKKKEEAEKASGQAGQAKVQGD) is disordered. The 256-residue stretch at 302 to 557 (MNSKEALGGG…AEQCLAHPWL (256 aa)) folds into the Protein kinase domain. Residues 308–316 (LGGGKFGAV) and lysine 331 each bind ATP. Aspartate 423 serves as the catalytic Proton acceptor. Threonine 462 carries the phosphothreonine modification. A calmodulin-binding region spans residues 591-603 (IAVSAANRFKKIS).

Belongs to the protein kinase superfamily. CAMK Ser/Thr protein kinase family. May interact with centrin.

Its subcellular location is the cytoplasm. The enzyme catalyses L-seryl-[myosin light chain] + ATP = O-phospho-L-seryl-[myosin light chain] + ADP + H(+). It catalyses the reaction L-threonyl-[myosin light chain] + ATP = O-phospho-L-threonyl-[myosin light chain] + ADP + H(+). Functionally, implicated in the level of global muscle contraction and cardiac function. Phosphorylates a specific serine in the N-terminus of a myosin light chain. In Mus musculus (Mouse), this protein is Myosin light chain kinase 2, skeletal/cardiac muscle (Mylk2).